Reading from the N-terminus, the 93-residue chain is CRISPR-associated endoribonuclease Cas2 3 (93 aa).

Asp10 provides a ligand contact to Mg(2+).

The protein belongs to the CRISPR-associated endoribonuclease Cas2 protein family. In terms of assembly, homodimer, forms a heterotetramer with a Cas1 homodimer. It depends on Mg(2+) as a cofactor.

Its function is as follows. CRISPR (clustered regularly interspaced short palindromic repeat), is an adaptive immune system that provides protection against mobile genetic elements (viruses, transposable elements and conjugative plasmids). CRISPR clusters contain sequences complementary to antecedent mobile elements and target invading nucleic acids. CRISPR clusters are transcribed and processed into CRISPR RNA (crRNA). Functions as a ssRNA-specific endoribonuclease. Involved in the integration of spacer DNA into the CRISPR cassette. This chain is CRISPR-associated endoribonuclease Cas2 3, found in Chloroflexus aurantiacus (strain ATCC 29366 / DSM 635 / J-10-fl).